Here is a 345-residue protein sequence, read N- to C-terminus: Holliday junction branch migration complex subunit RuvB (345 aa).

The large ATPase domain (RuvB-L) stretch occupies residues 1-186 (MSTDPDEREV…FGFTAHMDFY (186 aa)). Residues Leu25, Arg26, Gly67, Lys70, Thr71, Ser72, 133-135 (EDF), Arg176, Tyr186, and Arg223 each bind ATP. Thr71 provides a ligand contact to Mg(2+). The tract at residues 187 to 257 (EPAELERVLV…VAKAALAVYD (71 aa)) is small ATPAse domain (RuvB-S). The interval 260–345 (ELGLDRLDRA…AGANQPGLFE (86 aa)) is head domain (RuvB-H). Residues Arg315 and Arg320 each contribute to the DNA site.

The protein belongs to the RuvB family. Homohexamer. Forms an RuvA(8)-RuvB(12)-Holliday junction (HJ) complex. HJ DNA is sandwiched between 2 RuvA tetramers; dsDNA enters through RuvA and exits via RuvB. An RuvB hexamer assembles on each DNA strand where it exits the tetramer. Each RuvB hexamer is contacted by two RuvA subunits (via domain III) on 2 adjacent RuvB subunits; this complex drives branch migration. In the full resolvosome a probable DNA-RuvA(4)-RuvB(12)-RuvC(2) complex forms which resolves the HJ.

It localises to the cytoplasm. The catalysed reaction is ATP + H2O = ADP + phosphate + H(+). The RuvA-RuvB-RuvC complex processes Holliday junction (HJ) DNA during genetic recombination and DNA repair, while the RuvA-RuvB complex plays an important role in the rescue of blocked DNA replication forks via replication fork reversal (RFR). RuvA specifically binds to HJ cruciform DNA, conferring on it an open structure. The RuvB hexamer acts as an ATP-dependent pump, pulling dsDNA into and through the RuvAB complex. RuvB forms 2 homohexamers on either side of HJ DNA bound by 1 or 2 RuvA tetramers; 4 subunits per hexamer contact DNA at a time. Coordinated motions by a converter formed by DNA-disengaged RuvB subunits stimulates ATP hydrolysis and nucleotide exchange. Immobilization of the converter enables RuvB to convert the ATP-contained energy into a lever motion, pulling 2 nucleotides of DNA out of the RuvA tetramer per ATP hydrolyzed, thus driving DNA branch migration. The RuvB motors rotate together with the DNA substrate, which together with the progressing nucleotide cycle form the mechanistic basis for DNA recombination by continuous HJ branch migration. Branch migration allows RuvC to scan DNA until it finds its consensus sequence, where it cleaves and resolves cruciform DNA. The chain is Holliday junction branch migration complex subunit RuvB from Mycobacterium marinum (strain ATCC BAA-535 / M).